The chain runs to 199 residues: Recombination protein RecR (199 aa).

The C4-type zinc-finger motif lies at 56–71; that stretch reads CSICFNWSAEDPCEIC. In terms of domain architecture, Toprim spans 79-174; the sequence is STWCVVADVK…GLRMTRLAFG (96 aa).

This sequence belongs to the RecR family.

Functionally, may play a role in DNA repair. It seems to be involved in an RecBC-independent recombinational process of DNA repair. It may act with RecF and RecO. This is Recombination protein RecR from Synechococcus sp. (strain JA-3-3Ab) (Cyanobacteria bacterium Yellowstone A-Prime).